The chain runs to 603 residues: Thread biopolymer filament subunit gamma (603 aa).

The head stretch occupies residues 1 to 191; that stretch reads MASHSSVSYR…ENETMEEELK (191 aa). The 319-residue stretch at 158 to 476 folds into the IF rod domain; that stretch reads VKNILGTLNQ…KLLEGQELMV (319 aa). The coil 1A stretch occupies residues 193–227; the sequence is LTGGVPMSPDSTVNLENVETQVTEMLTEVSNLTLE. The tract at residues 228–240 is linker 1; the sequence is RVRLEIDVDHLRA. The tract at residues 241–341 is coil 1B; sequence TADEIKSKYE…DALNVMREEY (101 aa). The segment at 342–362 is linker 12; that stretch reads QQVVTKNVQEAETYCKMQIDQ. The tract at residues 363-381 is coil 2A; that stretch reads IQGISTQTTEQISILDKEI. The linker 2 stretch occupies residues 382–389; that stretch reads NTLEKELQ. The interval 390-510 is coil 2B; the sequence is PLNVEYQRLL…SSVGYGASST (121 aa). Residues 511 to 603 form a tail region; the sequence is TLGAISGGYS…GHDSTIILQQ (93 aa). Low complexity predominate over residues 562 to 587; that stretch reads SSSGGHSMYSSSSMKRSSSKSASASA. The segment at 562–603 is disordered; sequence SSSGGHSMYSSSSMKRSSSKSASASAGGYGTSGHDSTIILQQ.

This sequence belongs to the intermediate filament family. Coiled-coil heterodimer of an alpha and a gamma subunit. Assemble into 10 nm filaments. Forms a massive, conical, intermediate filament biopolymer of approximately 60 cm.

The protein localises to the secreted. Its subcellular location is the extracellular space. In terms of biological role, released extracellularly into seawater and provides physical and biological defense against invasive organism by modulation of the viscoelastic properties of mucus. The chain is Thread biopolymer filament subunit gamma from Eptatretus stoutii (Pacific hagfish).